We begin with the raw amino-acid sequence, 92 residues long: Small ribosomal subunit protein uS19 (92 aa).

This sequence belongs to the universal ribosomal protein uS19 family.

In terms of biological role, protein S19 forms a complex with S13 that binds strongly to the 16S ribosomal RNA. The chain is Small ribosomal subunit protein uS19 from Nitrobacter winogradskyi (strain ATCC 25391 / DSM 10237 / CIP 104748 / NCIMB 11846 / Nb-255).